The chain runs to 335 residues: Tetraacyldisaccharide 4'-kinase (335 aa).

58–65 (TVGGSGKT) is a binding site for ATP.

Belongs to the LpxK family.

The enzyme catalyses a lipid A disaccharide + ATP = a lipid IVA + ADP + H(+). It participates in glycolipid biosynthesis; lipid IV(A) biosynthesis; lipid IV(A) from (3R)-3-hydroxytetradecanoyl-[acyl-carrier-protein] and UDP-N-acetyl-alpha-D-glucosamine: step 6/6. Functionally, transfers the gamma-phosphate of ATP to the 4'-position of a tetraacyldisaccharide 1-phosphate intermediate (termed DS-1-P) to form tetraacyldisaccharide 1,4'-bis-phosphate (lipid IVA). In Shewanella sp. (strain MR-4), this protein is Tetraacyldisaccharide 4'-kinase.